Here is a 481-residue protein sequence, read N- to C-terminus: Guanine nucleotide exchange factor C9orf72 homolog (481 aa).

The region spanning Ser-23–Ser-194 is the uDENN C9ORF72-type domain. In terms of domain architecture, cDENN C9ORF72-type spans Asp-200–Thr-343. One can recognise a dDENN C9ORF72-type domain in the interval Val-370–Phe-464. Residues Ser-461–Phe-481 are required for the homodimerization of the C9orf72-SMCR8 complex.

Component of the C9orf72-SMCR8 complex, at least composed of C9orf72, SMCR8 and WDR41. The complex is formed of two protomers, each individually consisting of one molecule each of C9orf72, SMCR8 and WDR41. The protomers homodimerize via an interaction between C9orf72 (via C-terminus) and SMCR8 (via N-terminus). Within each protomer SMCR8 (via DENN domain) acts as a bridging protein between WDR41 (via C-terminus and N-terminus) and C9orf72 (via C-terminus). The C9orf72-SMCR8 complex associates with the ULK1/ATG1 kinase complex. Interacts with ULK1/ATG1 kinase complex members ULK1, ATG13 and RB1CC1. Interacts with SMCR8; the interaction is direct. Interacts with HNRNPA1, HNRNPA2B1 and UBQLN2. Interacts with small Rab GTPase RAB1A; the interaction mediates recruitment of RAB1A to the ULK1/ATG1 kinase complex. Also interacts with small Rab GTPase RAB7A. Interacts with cofilin. Interacts with GTP-binding proteins ARF1 and ARF6. Interacts with the DLG4/PSD-95. Interacts with CARM1 (via PH domain-like fold). Interacts with RAB39A and RAB39B (in GDP-bound forms); functions as GEF for RAB39A and RAB39B. As to expression, expressed in postnatal cerebellum and cortex (at protein level). Neuronal expression is detected in several regions of the adult brain and spinal cord. Prominent expression also observed in embryonic and early postnatal neurons including retinal ganglion cells, sensory neurons in the olfactory epithelium and in dorsal root ganglia, and spinal motor neurons. Expressed in the developing cerebral cortex, cerebellum, olfactory bulb, hippocampus and spinal cord in the embryo and in P0 cortical neurons and astrocytes. Also expressed in non-neuronal tissues such as kidney and tooth. In the spleen, highly expressed in myeloid cells compared to B cell and T cell populations where expression is much lower. In the brain, highly expressed in microglia. In terms of tissue distribution, expressed in the forebrain, including in the glomerular layer of the olfactory bulb (at protein level).

Its subcellular location is the nucleus. It is found in the cytoplasm. It localises to the P-body. The protein localises to the stress granule. The protein resides in the endosome. Its subcellular location is the lysosome. It is found in the cytoplasmic vesicle. It localises to the autophagosome. The protein localises to the autolysosome. The protein resides in the secreted. Its subcellular location is the cell projection. It is found in the axon. It localises to the growth cone. The protein localises to the perikaryon. The protein resides in the dendrite. Its subcellular location is the presynapse. It is found in the postsynapse. Acts as a guanine-nucleotide releasing factor (GEF) for Rab GTPases by promoting the conversion of inactive RAB-GDP to the active form RAB-GTP. Acts as a GEF for RAB39A which enables HOPS-mediated autophagosome-lysosome membrane tethering and fusion in mammalian autophagy. Component of the C9orf72-SMCR8 complex where both subunits display GEF activity and that regulates autophagy. As part of the C9orf72-SMCR8-WDR41 (CSW) complex, functions as GEF for RAB8A, and RAB39B, thereby promoting autophagosome maturation. As part of the C9orf72-SMCR8 complex, also functions as GTPase activating protein (GAP) for RAB8A and RAB11A in vitro. The C9orf72-SMCR8 complex also acts as a regulator of autophagy initiation by interacting with the ULK1/ATG1 kinase complex and modulating its protein kinase activity. Promotes initiation of autophagy by regulating the RAB1A-dependent trafficking of the ULK1/ATG1 kinase complex to the phagophore which leads to autophagosome formation. Acts as a regulator of mTORC1 signaling by promoting phosphorylation of mTORC1 substrates. Plays a role in endosomal trafficking. May be involved in regulating the maturation of phagosomes to lysosomes. Promotes the lysosomal localization and lysosome-mediated degradation of CARM1 which leads to inhibition of starvation-induced lipid metabolism. Regulates actin dynamics in motor neurons by inhibiting the GTP-binding activity of ARF6, leading to ARF6 inactivation. This reduces the activity of the LIMK1 and LIMK2 kinases which are responsible for phosphorylation and inactivation of CFL1/cofilin, leading to cofilin activation. Positively regulates axon extension and axon growth cone size in spinal motor neurons. Required for SMCR8 protein expression and localization at pre- and post-synaptic compartments in the forebrain, also regulates protein abundance of RAB3A and GRIA1/GLUR1 in post-synaptic compartments in the forebrain and hippocampus. Plays a role within the hematopoietic system in restricting inflammation and the development of autoimmunity. The protein is Guanine nucleotide exchange factor C9orf72 homolog of Mus musculus (Mouse).